The sequence spans 302 residues: uncharacterized protein (302 aa).

Residues asparagine 32, asparagine 39, and asparagine 94 are each glycosylated (N-linked (GlcNAc...) asparagine). One can recognise a ShKT domain in the interval 80 to 115; that stretch reads CRDTDMNCAVWVATNTSDCENVELVNSHCPRTCQTC. 3 disulfide bridges follow: cysteine 80/cysteine 115, cysteine 87/cysteine 108, and cysteine 98/cysteine 112. N-linked (GlcNAc...) asparagine glycosylation is present at asparagine 181.

This is an uncharacterized protein from Caenorhabditis elegans.